The sequence spans 484 residues: Glycogen synthase (484 aa).

Position 15 (K15) interacts with ADP-alpha-D-glucose.

The protein belongs to the glycosyltransferase 1 family. Bacterial/plant glycogen synthase subfamily.

The enzyme catalyses [(1-&gt;4)-alpha-D-glucosyl](n) + ADP-alpha-D-glucose = [(1-&gt;4)-alpha-D-glucosyl](n+1) + ADP + H(+). The protein operates within glycan biosynthesis; glycogen biosynthesis. Functionally, synthesizes alpha-1,4-glucan chains using ADP-glucose. This chain is Glycogen synthase, found in Syntrophotalea carbinolica (strain DSM 2380 / NBRC 103641 / GraBd1) (Pelobacter carbinolicus).